The sequence spans 570 residues: MIPPEIRRSVLLQKAIKLALAGTLLTFASFSATAADPSSDTETPQPPDILLGPLFNDVQNAKLFPDQKTFADAIPNSDPLMILADYRMQRNQSGFDLRHFVDVNFTLPKAGEKYVPPAGQSLREHIDGLWPVLTRSTKNVEKWDSLLPLPESYVVPGGRFREIYYWDSYFTMLGLAESGHWDKVADMVANFGYEIDAWGHIPNGNRTYYLSRSQPPFFAFMVELLAQHEGDDALKEYLPQLQKEYAYWMEGVETLQPGQQNQRVVKLEDGSVLNRYWDDRDTPRPESWVEDIATAKSNPNRPATEIYRDLRSAAASGWDFSSRWMDNPQQLSTIRTTTIVPVDLNALLYQLEKTLARASAAAGDRAKASQYDALANARQKAIEMHLWNNKEGWYADYDLQNNKIRDQLTAAALFPLYVNAAAKDRAVKVAAAAQAHLLQPGGLATTSVKSGQQWDAPNGWAPLQWVAAEGLQNYGQDDVAMEVTWRFLTNVQHTYDREKKLVEKYDVSSTGTGGGGGEYPLQDGFGWTNGVTLKMLDLICPQEKPCDSVPSTRPASLSATPTKTPSAATQ.

A signal peptide spans 1 to 34; sequence MIPPEIRRSVLLQKAIKLALAGTLLTFASFSATA. Residues Arg159, 166 to 167, Asn203, 212 to 214, 284 to 286, and Gly317 each bind substrate; these read WD, RSQ, and RPE. Residues Asp319 and Glu503 each act as proton donor/acceptor in the active site. A substrate-binding site is contributed by Glu518. Positions 544-570 are disordered; sequence KPCDSVPSTRPASLSATPTKTPSAATQ. Positions 554–570 are enriched in low complexity; that stretch reads PASLSATPTKTPSAATQ.

The protein belongs to the glycosyl hydrolase 37 family. As to quaternary structure, monomer.

Its subcellular location is the periplasm. It carries out the reaction alpha,alpha-trehalose + H2O = alpha-D-glucose + beta-D-glucose. Functionally, provides the cells with the ability to utilize trehalose at high osmolarity by splitting it into glucose molecules that can subsequently be taken up by the phosphotransferase-mediated uptake system. In Salmonella paratyphi A (strain AKU_12601), this protein is Periplasmic trehalase.